A 546-amino-acid chain; its full sequence is (-)-5-epieremophilene synthase STPS3 (546 aa).

Mg(2+) is bound by residues Asp-299, Asp-303, Asp-442, Thr-446, and Glu-450. Residues 299–303 (DDTYD) carry the DDXXD motif motif.

The protein belongs to the terpene synthase family. Tpsa subfamily. Monomer. The cofactor is Mg(2+). Highly expressed in flowers and at lower levels in leaves.

The catalysed reaction is (2E,6E)-farnesyl diphosphate = (-)-5-epi-eremophilene + diphosphate. It participates in secondary metabolite biosynthesis; terpenoid biosynthesis. In terms of biological role, sesquiterpene synthase that catalyzes the conversion of farnesyl diphosphate to (-)-5-epi-eremophilene. This chain is (-)-5-epieremophilene synthase STPS3, found in Salvia miltiorrhiza (Chinese sage).